Here is a 1165-residue protein sequence, read N- to C-terminus: Phenyloxazoline synthase MbtB (1165 aa).

The Carrier 1 domain occupies 5-78 (PARSEDIREE…AWAQLVTAGR (74 aa)). An O-(pantetheine 4'-phosphoryl)serine modification is found at serine 39. Residues 77 to 100 (GRQDTDSAAPPADSSGDPSGETEP) form a disordered region. The condensation/cyclization stretch occupies residues 97 to 393 (ETEPFALAPM…SSLLLDVDLV (297 aa)). The segment at 578–973 (SYAQLRDQAL…RVPGVRTAVA (396 aa)) is adenylation. The Carrier 2 domain maps to 1055 to 1131 (AASTPLEGAL…ALAAVLRAAE (77 aa)). Serine 1090 bears the O-(pantetheine 4'-phosphoryl)serine mark.

The protein belongs to the ATP-dependent AMP-binding enzyme family. MbtB subfamily. The cofactor is pantetheine 4'-phosphate. Post-translationally, 4'-phosphopantetheine is transferred from CoA to a specific serine in each of the two carrier protein domains, leading to their activation from apo to holo forms.

It participates in siderophore biosynthesis; mycobactin biosynthesis. In terms of biological role, involved in the initial steps of the mycobactin biosynthetic pathway. Putatively couples activated salicylic acid with serine or threonine and cyclizes this precursor to the hydroxyphenyloxazoline ring system present in this class of siderophores. This is Phenyloxazoline synthase MbtB (mbtB) from Mycolicibacterium paratuberculosis (strain ATCC BAA-968 / K-10) (Mycobacterium paratuberculosis).